The following is a 185-amino-acid chain: Elongation factor P (185 aa).

Belongs to the elongation factor P family.

It is found in the cytoplasm. It functions in the pathway protein biosynthesis; polypeptide chain elongation. Functionally, involved in peptide bond synthesis. Stimulates efficient translation and peptide-bond synthesis on native or reconstituted 70S ribosomes in vitro. Probably functions indirectly by altering the affinity of the ribosome for aminoacyl-tRNA, thus increasing their reactivity as acceptors for peptidyl transferase. The protein is Elongation factor P of Streptococcus pyogenes serotype M28 (strain MGAS6180).